We begin with the raw amino-acid sequence, 678 residues long: Ribonuclease Z 2, mitochondrial (678 aa).

The N-terminal 37 residues, 1–37 (MKASLLVPRRALLFGQLLPPKYSWYSVKRWQSQLTFR), are a transit peptide targeting the mitochondrion.

It belongs to the RNase Z family. The cofactor is Zn(2+).

It localises to the mitochondrion. It is found in the cytoplasm. It catalyses the reaction Endonucleolytic cleavage of RNA, removing extra 3' nucleotides from tRNA precursor, generating 3' termini of tRNAs. A 3'-hydroxy group is left at the tRNA terminus and a 5'-phosphoryl group is left at the trailer molecule.. Zinc phosphodiesterase, which displays some tRNA 3'-processing endonuclease activity. May be involved in tRNA maturation, by removing a 3'-trailer from precursor tRNA. This chain is Ribonuclease Z 2, mitochondrial (trz2), found in Schizosaccharomyces pombe (strain 972 / ATCC 24843) (Fission yeast).